A 491-amino-acid chain; its full sequence is NADH-ubiquinone oxidoreductase chain 4 (491 aa).

The next 14 membrane-spanning stretches (helical) occupy residues isoleucine 2–valine 22, alanine 37–methionine 57, isoleucine 89–tryptophan 109, phenylalanine 114–phenylalanine 134, leucine 139–valine 159, alanine 169–phenylalanine 189, tryptophan 215–isoleucine 235, proline 245–leucine 265, isoleucine 271–isoleucine 291, isoleucine 308–isoleucine 328, valine 332–valine 352, phenylalanine 372–proline 392, isoleucine 412–leucine 432, and isoleucine 457–isoleucine 477.

It belongs to the complex I subunit 4 family.

It is found in the mitochondrion membrane. The enzyme catalyses a ubiquinone + NADH + 5 H(+)(in) = a ubiquinol + NAD(+) + 4 H(+)(out). Functionally, core subunit of the mitochondrial membrane respiratory chain NADH dehydrogenase (Complex I) that is believed to belong to the minimal assembly required for catalysis. Complex I functions in the transfer of electrons from NADH to the respiratory chain. The immediate electron acceptor for the enzyme is believed to be ubiquinone. In Metridium senile (Brown sea anemone), this protein is NADH-ubiquinone oxidoreductase chain 4 (ND4).